The primary structure comprises 211 residues: Large ribosomal subunit protein uL4 (211 aa).

The segment at 52-79 (GRAEVHGSNSKPYSQKGTGRARRGDKKS) is disordered. A compositionally biased stretch (polar residues) spans 58-68 (GSNSKPYSQKG).

Belongs to the universal ribosomal protein uL4 family. In terms of assembly, part of the 50S ribosomal subunit.

Its function is as follows. One of the primary rRNA binding proteins, this protein initially binds near the 5'-end of the 23S rRNA. It is important during the early stages of 50S assembly. It makes multiple contacts with different domains of the 23S rRNA in the assembled 50S subunit and ribosome. Functionally, forms part of the polypeptide exit tunnel. The polypeptide is Large ribosomal subunit protein uL4 (Treponema denticola (strain ATCC 35405 / DSM 14222 / CIP 103919 / JCM 8153 / KCTC 15104)).